The primary structure comprises 214 residues: Peptidyl-tRNA hydrolase (214 aa).

Y14 is a tRNA binding site. The active-site Proton acceptor is H19. Residues Y64, N66, and N113 each coordinate tRNA. The disordered stretch occupies residues 184–214; that stretch reads RINAPPPKPEKKRGSETSDPSAESADHAGGG.

It belongs to the PTH family. Monomer.

The protein resides in the cytoplasm. It catalyses the reaction an N-acyl-L-alpha-aminoacyl-tRNA + H2O = an N-acyl-L-amino acid + a tRNA + H(+). Hydrolyzes ribosome-free peptidyl-tRNAs (with 1 or more amino acids incorporated), which drop off the ribosome during protein synthesis, or as a result of ribosome stalling. Its function is as follows. Catalyzes the release of premature peptidyl moieties from peptidyl-tRNA molecules trapped in stalled 50S ribosomal subunits, and thus maintains levels of free tRNAs and 50S ribosomes. The protein is Peptidyl-tRNA hydrolase of Roseiflexus castenholzii (strain DSM 13941 / HLO8).